The sequence spans 58 residues: Large ribosomal subunit protein bL32 (58 aa).

Residues 1-19 show a composition bias toward basic residues; that stretch reads MAVPKRKTSKSNTKMRRAA. The segment at 1-22 is disordered; sequence MAVPKRKTSKSNTKMRRAANSK.

Belongs to the bacterial ribosomal protein bL32 family.

The sequence is that of Large ribosomal subunit protein bL32 from Clostridioides difficile (strain 630) (Peptoclostridium difficile).